Here is a 453-residue protein sequence, read N- to C-terminus: Protein amnionless (453 aa).

The first 19 residues, M1–A19, serve as a signal peptide directing secretion. At V20–S357 the chain is on the extracellular side. N35 is a glycosylation site (N-linked (GlcNAc...) asparagine). 6 cysteine pairs are disulfide-bonded: C43/C96, C137/C213, C205/C211, C223/C249, C234/C250, and C239/C253. Residues S67–V87 form an interaction with CUBN region. Positions P202–G254 constitute a VWFC domain. The helical transmembrane segment at A358 to V378 threads the bilayer. The Cytoplasmic portion of the chain corresponds to A379–A453.

As to quaternary structure, interacts (via extracellular region) with CUBN/cubilin, giving rise to a huge complex containing one AMN chain and three CUBN chains. N-glycosylated. Post-translationally, a soluble form arises by proteolytic removal of the membrane anchor. In terms of tissue distribution, detected in proximal tubules in the kidney cortex (at protein level). Long isoforms are highly expressed in small intestine, colon and kidney (renal proximal tubule epithelial cells). Shorter isoforms are detected at lower levels in testis, thymus and peripheral blood leukocytes.

It is found in the apical cell membrane. Its subcellular location is the cell membrane. The protein resides in the endosome membrane. It localises to the membrane. The protein localises to the coated pit. It is found in the secreted. Functionally, membrane-bound component of the endocytic receptor formed by AMN and CUBN. Required for normal CUBN glycosylation and trafficking to the cell surface. The complex formed by AMN and CUBN is required for efficient absorption of vitamin B12. Required for normal CUBN-mediated protein transport in the kidney. The polypeptide is Protein amnionless (AMN) (Homo sapiens (Human)).